The chain runs to 803 residues: DNA polymerase 2 (803 aa).

It belongs to the DNA polymerase type-B family.

The catalysed reaction is DNA(n) + a 2'-deoxyribonucleoside 5'-triphosphate = DNA(n+1) + diphosphate. This chain is DNA polymerase 2 (polB), found in Aeropyrum pernix (strain ATCC 700893 / DSM 11879 / JCM 9820 / NBRC 100138 / K1).